Consider the following 627-residue polypeptide: Glyco-Gag protein (627 aa).

Residues 1-63 (LGDVPRTSGA…FLLSVWNRSR (63 aa)) lie on the Cytoplasmic side of the membrane. The chain crosses the membrane as a helical span at residues 64 to 86 (AARLVCCSIVLCCLCLTVFLYLS). At 87-627 (ENMGQTVTTP…PQASLLTLDD (541 aa)) the chain is on the extracellular side. Asparagine 113 carries N-linked (GlcNAc...) asparagine; by host glycosylation. Pro residues predominate over residues 199 to 215 (PPSAPSLPPEPPFPTPP). 2 disordered regions span residues 199-310 (PPSA…RQGG) and 523-627 (RETP…TLDD). 2 stretches are compositionally biased toward basic and acidic residues: residues 523–555 (RETP…EKER) and 575–608 (RQDR…DCPK). Residues 593–608 (CAYCKEKGHWARDCPK) form a CCHC-type zinc finger.

Post-translationally, glycosylated by host. Cleaved by host near the middle of the molecule, releasing the c-terminal half containing capsid and nucleoprotein domains op GAG.

Its subcellular location is the host cell membrane. Functionally, plays a role in viral particle release. Presumably acts by facilitating the fission of the virion bud at the cell surface. May prevent the antiviral activity of murine APOBEC3. The polypeptide is Glyco-Gag protein (Friend murine leukemia virus (isolate 57) (FrMLV)).